A 529-amino-acid polypeptide reads, in one-letter code: Peptide chain release factor 3 (529 aa).

Residues 10–278 enclose the tr-type G domain; it reads ARRRTFAIIS…MFVEFAPGPQ (269 aa). GTP is bound by residues 19 to 26, 87 to 91, and 141 to 144; these read SHPDAGKT, DTPGH, and NKMD.

It belongs to the TRAFAC class translation factor GTPase superfamily. Classic translation factor GTPase family. PrfC subfamily.

The protein resides in the cytoplasm. Functionally, increases the formation of ribosomal termination complexes and stimulates activities of RF-1 and RF-2. It binds guanine nucleotides and has strong preference for UGA stop codons. It may interact directly with the ribosome. The stimulation of RF-1 and RF-2 is significantly reduced by GTP and GDP, but not by GMP. The chain is Peptide chain release factor 3 from Nitratidesulfovibrio vulgaris (strain DSM 19637 / Miyazaki F) (Desulfovibrio vulgaris).